We begin with the raw amino-acid sequence, 1366 residues long: DNA-directed RNA polymerase subunit beta' (1366 aa).

The disordered stretch occupies residues methionine 1–arginine 40. Basic residues predominate over residues lysine 7–lysine 24. Over residues glutamine 25 to serine 38 the composition is skewed to polar residues. Zn(2+) is bound by residues cysteine 250, cysteine 317, cysteine 324, and cysteine 327. Residues threonine 1299–glutamate 1366 are disordered. Residues alanine 1353–glutamate 1366 show a composition bias toward low complexity.

This sequence belongs to the RNA polymerase beta' chain family. RpoC2 subfamily. In terms of assembly, in cyanobacteria the RNAP catalytic core is composed of 2 alpha, 1 beta, 1 beta', 1 gamma and 1 omega subunit. When a sigma factor is associated with the core the holoenzyme is formed, which can initiate transcription. Zn(2+) is required as a cofactor.

It carries out the reaction RNA(n) + a ribonucleoside 5'-triphosphate = RNA(n+1) + diphosphate. In terms of biological role, DNA-dependent RNA polymerase catalyzes the transcription of DNA into RNA using the four ribonucleoside triphosphates as substrates. The chain is DNA-directed RNA polymerase subunit beta' from Prochlorococcus marinus (strain MIT 9211).